A 495-amino-acid chain; its full sequence is Glycerol kinase (495 aa).

T11 is an ADP binding site. ATP is bound by residues T11, T12, and S13. A sn-glycerol 3-phosphate-binding site is contributed by T11. R15 provides a ligand contact to ADP. Sn-glycerol 3-phosphate-binding residues include R81, E82, Y133, and D242. R81, E82, Y133, D242, and Q243 together coordinate glycerol. Positions 264 and 307 each coordinate ADP. Residues T264, G307, Q311, and G408 each coordinate ATP. G408 is a binding site for ADP.

It belongs to the FGGY kinase family.

The catalysed reaction is glycerol + ATP = sn-glycerol 3-phosphate + ADP + H(+). It functions in the pathway polyol metabolism; glycerol degradation via glycerol kinase pathway; sn-glycerol 3-phosphate from glycerol: step 1/1. Its activity is regulated as follows. Inhibited by fructose 1,6-bisphosphate (FBP). Its function is as follows. Key enzyme in the regulation of glycerol uptake and metabolism. Catalyzes the phosphorylation of glycerol to yield sn-glycerol 3-phosphate. The protein is Glycerol kinase of Geobacter sp. (strain M21).